We begin with the raw amino-acid sequence, 236 residues long: Large ribosomal subunit protein uL1 (236 aa).

Belongs to the universal ribosomal protein uL1 family. Part of the 50S ribosomal subunit.

Binds directly to 23S rRNA. The L1 stalk is quite mobile in the ribosome, and is involved in E site tRNA release. Functionally, protein L1 is also a translational repressor protein, it controls the translation of the L11 operon by binding to its mRNA. The sequence is that of Large ribosomal subunit protein uL1 from Protochlamydia amoebophila (strain UWE25).